A 224-amino-acid chain; its full sequence is uncharacterized protein (224 aa).

A run of 4 helical transmembrane segments spans residues 25–45 (ALAW…IYGI), 56–76 (VFLI…VILP), 107–127 (ELFL…YFFV), and 149–169 (IFVK…VVYF).

It is found in the cell membrane. This is an uncharacterized protein from Mycoplasma pneumoniae (strain ATCC 29342 / M129 / Subtype 1) (Mycoplasmoides pneumoniae).